The sequence spans 146 residues: Hydroxyproline-rich systemin (146 aa).

Positions 1–24 (MISFFRAFFLIIIISFLIFVGAQA) are cleaved as a signal peptide. A propeptide spanning residues 25–48 (RTLLGNYHDDEMLIELKLESGNYG) is cleaved from the precursor. Positions 47–128 (YGRTPYKTPP…PPPPKPQDEQ (82 aa)) are disordered. 4-hydroxyproline is present on residues proline 51, proline 55, proline 56, proline 57, proline 58, and proline 63. Proline 51, proline 55, proline 56, proline 57, proline 58, and proline 63 each carry an O-linked (Ara...) hydroxyproline glycan. A propeptide spanning residues 67-70 (EIVN) is cleaved from the precursor. 4-hydroxyproline is present on residues proline 79, proline 80, and proline 82. Residues proline 79, proline 80, and proline 82 are each glycosylated (O-linked (Ara...) hydroxyproline). Positions 86–110 (PIIGQLTTITTTPHHDDTVAAPPVG) are excised as a propeptide. Proline 119, proline 120, proline 121, and proline 122 each carry 4-hydroxyproline. Residues proline 119, proline 120, proline 121, and proline 122 are each glycosylated (O-linked (Ara...) hydroxyproline). A propeptide spanning residues 131–146 (IIITSSSSTLPLQASY) is cleaved from the precursor.

O-glycosylated; contains pentose side chains. Leaves.

The protein localises to the secreted. Functionally, activates a lipid-based signal transduction pathway in which linolenic acid is converted to jasmonic acid, a potent activator of defense gene transcription. Induces synthesis of proteinase inhibitors I and II in leaves when supplied through cut stems. In Solanum lycopersicum (Tomato), this protein is Hydroxyproline-rich systemin.